The following is an 889-amino-acid chain: Rho GTPase-activating protein 27 (889 aa).

The SH3 domain maps to 6–69 (VGDVYVLVEH…PAQYVRELPA (64 aa)). The disordered stretch occupies residues 104 to 132 (AGPDGAPEESGGRASSLCGPAQRGAATQR). Phosphoserine occurs at positions 156, 216, and 249. WW domains follow at residues 246-280 (PLPS…SPFE) and 299-333 (VSLE…DEAE). The segment covering 329-341 (EDEAENEPEEELE) has biased composition (acidic residues). The disordered stretch occupies residues 329-397 (EDEAENEPEE…SPLTTPPGWS (69 aa)). The residue at position 347 (Ser347) is a Phosphoserine. Residues 383-395 (EPGPTSPLTTPPG) show a composition bias toward low complexity. Residues 411-444 (HFTQEQWVRLEDPHGKPYFYNPEDSSVRWELPQV) enclose the WW 3 domain. The segment at 447–474 (PAPRSIHKSSQDGDTPAQASPPEEKVPA) is disordered. A Phosphoserine modification is found at Ser456. At Thr461 the chain carries Phosphothreonine. Ser466 is modified (phosphoserine). Positions 496–612 (TLDKAGVLHR…WHKAIAQGIQ (117 aa)) constitute a PH domain. Positions 617–655 (ELPPEESESSRVDFGSSERLGSWQEKEEDARPNAAAPAL) are disordered. The Rho-GAP domain maps to 697–886 (CALAALCERE…LILQQCADIF (190 aa)).

In terms of assembly, interacts with SH3KBP1/CIN85. As to expression, expressed in germinal center B-cell, spleen, chronic lymphocytic leukemia, pancreatic cancer and lung cancer.

Its subcellular location is the cytoplasm. The protein resides in the membrane. Rho GTPase-activating protein which may be involved in clathrin-mediated endocytosis. GTPase activators for the Rho-type GTPases act by converting them to an inactive GDP-bound state. Has activity toward CDC42 and RAC1. The chain is Rho GTPase-activating protein 27 from Homo sapiens (Human).